The following is a 114-amino-acid chain: Tyrosine-protein phosphatase 13 (114 aa).

The Tyrosine-protein phosphatase domain maps to 1–114 (WRMLWEHNST…QFGQEGPITI (114 aa)). Position 82 (Glu82) interacts with substrate.

It belongs to the protein-tyrosine phosphatase family.

It carries out the reaction O-phospho-L-tyrosyl-[protein] + H2O = L-tyrosyl-[protein] + phosphate. The sequence is that of Tyrosine-protein phosphatase 13 (STY-13) from Styela plicata (Wrinkled sea squirt).